A 244-amino-acid polypeptide reads, in one-letter code: Chalcone--flavanone isomerase (244 aa).

Substrate contacts are provided by Thr-57, Asn-122, and Ser-199.

Belongs to the chalcone isomerase family.

It catalyses the reaction a chalcone = a flavanone.. It functions in the pathway secondary metabolite biosynthesis; flavonoid biosynthesis. Its function is as follows. Catalyzes the intramolecular cyclization of bicyclic chalcones into tricyclic (S)-flavanones. Responsible for the isomerization of 4,2',4',6'-tetrahydroxychalcone (also termed chalcone) into naringenin. The protein is Chalcone--flavanone isomerase (CHI) of Arabidopsis lyrata subsp. petraea (Northern rock-cress).